Here is a 580-residue protein sequence, read N- to C-terminus: Serine/threonine-protein kinase PINK1, mitochondrial (580 aa).

The N-terminal 77 residues, 1–77 (MAVRQALGRG…RFFRQSVAGL (77 aa)), are a transit peptide targeting the mitochondrion. Residues 78–93 (AARIQRQFMVRARGGA) lie on the Mitochondrial intermembrane side of the membrane. A helical membrane pass occupies residues 94 to 110 (GPCGRAVFLAFGLGLGL). Positions 111–117 (IEEKQAE) are required for outer membrane localization. The Cytoplasmic segment spans residues 111-580 (IEEKQAEGRR…LLLSSWRAAP (470 aa)). The 355-residue stretch at 156 to 510 (YLIGQAIGKG…LAANVLHLSL (355 aa)) folds into the Protein kinase domain. Residues 162–170 (IGKGCNAAV) and Lys186 each bind ATP. Ser227 bears the Phosphoserine; by autocatalysis mark. Asp361 (proton acceptor) is an active-site residue. Ser401 is modified (phosphoserine; by autocatalysis).

It belongs to the protein kinase superfamily. Ser/Thr protein kinase family. As to quaternary structure, upon mitochondrial depolarization, it forms a supercomplex with TOM and TIM23 complexes. PINK1-TOM-TIM23 supercomplex formation requires PINK1 interaction with TOMM20 and TOMM70 and is critical for PINK1 stabilization at the outer mitochondrial membrane, kinase activation and downstream mitophagy. Upon mitochondrial depolarization, interacts with TIMM23; the interaction is required for PINK1 accumulation at the outer mitochondrial membrane, kinase activation by autophosphorylation and PRKN recruitement to mitochondria. Interacts with PRKN. Interacts with FBXO7. Forms a complex with PRKN and PARK7. Interacts with NENF. It depends on Mg(2+) as a cofactor. Post-translationally, proteolytically cleaved. In healthy cells, the precursor is continuously imported into the inner mitochondrial membrane (IMM), where it is proteolytically cleaved by mitochondrial-processing peptidase (MPP) and then undergoes further proteolytic cleavage by PARL or AFG3L2 to give rise to the 52 kDa short form. The 52 kDa short form is then released into the cytosol where it rapidly undergoes proteasome-dependent degradation. In unhealthy cells, when cellular stress conditions lead to the loss of mitochondrial membrane potential, mitochondrial import is impaired leading to the precursor accumulating on the outer mitochondrial membrane (OMM). If accumulation at the OMM fails and it is imported into the depolarized mitochondria, it undergoes cleavage by the IMM protease OMA1, promoting its subsequent degradation by the proteasome. In terms of processing, autophosphorylated. Loss of mitochondrial membrane potential results in the precursor accumulating on the outer mitochondrial membrane (OMM) where it is activated by autophosphorylation. Autophosphorylation at Ser-227 and Ser-401 is essential for selective recruitment of PRKN to depolarized mitochondria, via PINK1-dependent phosphorylation of ubiquitin and PRKN. As to expression, high levels expressed in testis, lower levels in brain, heart, lung, liver and kidney.

The protein resides in the mitochondrion outer membrane. The protein localises to the mitochondrion inner membrane. It is found in the cytoplasm. Its subcellular location is the cytosol. The catalysed reaction is L-seryl-[protein] + ATP = O-phospho-L-seryl-[protein] + ADP + H(+). The enzyme catalyses L-threonyl-[protein] + ATP = O-phospho-L-threonyl-[protein] + ADP + H(+). Functionally, serine/threonine-protein kinase which acts as a sensor of mitochondrial damage and protects against mitochondrial dysfunction during cellular stress. It phosphorylates mitochondrial proteins to coordinate mitochondrial quality control mechanisms that remove and replace dysfunctional mitochondrial components. Depending on the severity of mitochondrial damage, activity ranges from preventing apoptosis and stimulating mitochondrial biogenesis to eliminating severely damaged mitochondria via PINK1-PRKN-dependent mitophagy. When cellular stress results in irreversible mitochondrial damage, PINK1 accumulates at the outer mitochondrial membrane (OMM) where it phosphorylates pre-existing polyubiquitin chains at 'Ser-65', recruits PRKN from the cytosol to the OMM and activates PRKN by phosphorylation at 'Ser-65'. Activated PRKN then ubiquinates VDAC1 and other OMM proteins to initiate mitophagy. The PINK1-PRKN pathway also promotes fission of damaged mitochondria by phosphorylating and thus promoting the PRKN-dependent degradation of mitochondrial proteins involved in fission such as MFN2. This prevents the refusion of unhealthy mitochondria with the mitochondrial network or initiates mitochondrial fragmentation facilitating their later engulfment by autophagosomes. Also promotes mitochondrial fission independently of PRKN and ATG7-mediated mitophagy, via the phosphorylation and activation of DNM1L. Regulates motility of damaged mitochondria by promoting the ubiquitination and subsequent degradation of MIRO1 and MIRO2; in motor neurons, this likely inhibits mitochondrial intracellular anterograde transport along the axons which probably increases the chance of the mitochondria undergoing mitophagy in the soma. Required for ubiquinone reduction by mitochondrial complex I by mediating phosphorylation of complex I subunit NDUFA10. Phosphorylates LETM1, positively regulating its mitochondrial calcium transport activity. This chain is Serine/threonine-protein kinase PINK1, mitochondrial (Pink1), found in Mus musculus (Mouse).